Here is a 212-residue protein sequence, read N- to C-terminus: Pyrrolidone-carboxylate peptidase (212 aa).

Residues Glu-80, Cys-143, and His-165 contribute to the active site.

It belongs to the peptidase C15 family. In terms of assembly, homotetramer.

It localises to the cytoplasm. The enzyme catalyses Release of an N-terminal pyroglutamyl group from a polypeptide, the second amino acid generally not being Pro.. Its function is as follows. Removes 5-oxoproline from various penultimate amino acid residues except L-proline. This chain is Pyrrolidone-carboxylate peptidase, found in Vibrio campbellii (strain ATCC BAA-1116).